The sequence spans 375 residues: Queuine tRNA-ribosyltransferase (375 aa).

Aspartate 90 serves as the catalytic Proton acceptor. Residues 90-94 (DSGGF), aspartate 144, glutamine 190, and glycine 217 contribute to the substrate site. The tract at residues 248 to 254 (GIGTPHY) is RNA binding. Aspartate 267 serves as the catalytic Nucleophile. Residues 272–276 (TRIAR) are RNA binding; important for wobble base 34 recognition. Positions 305, 307, 310, and 336 each coordinate Zn(2+).

Belongs to the queuine tRNA-ribosyltransferase family. Homodimer. Within each dimer, one monomer is responsible for RNA recognition and catalysis, while the other monomer binds to the replacement base PreQ1. Requires Zn(2+) as cofactor.

It catalyses the reaction 7-aminomethyl-7-carbaguanine + guanosine(34) in tRNA = 7-aminomethyl-7-carbaguanosine(34) in tRNA + guanine. It functions in the pathway tRNA modification; tRNA-queuosine biosynthesis. Catalyzes the base-exchange of a guanine (G) residue with the queuine precursor 7-aminomethyl-7-deazaguanine (PreQ1) at position 34 (anticodon wobble position) in tRNAs with GU(N) anticodons (tRNA-Asp, -Asn, -His and -Tyr). Catalysis occurs through a double-displacement mechanism. The nucleophile active site attacks the C1' of nucleotide 34 to detach the guanine base from the RNA, forming a covalent enzyme-RNA intermediate. The proton acceptor active site deprotonates the incoming PreQ1, allowing a nucleophilic attack on the C1' of the ribose to form the product. After dissociation, two additional enzymatic reactions on the tRNA convert PreQ1 to queuine (Q), resulting in the hypermodified nucleoside queuosine (7-(((4,5-cis-dihydroxy-2-cyclopenten-1-yl)amino)methyl)-7-deazaguanosine). In Borrelia recurrentis (strain A1), this protein is Queuine tRNA-ribosyltransferase.